A 277-amino-acid chain; its full sequence is 2,3,4,5-tetrahydropyridine-2,6-dicarboxylate N-succinyltransferase (277 aa).

R106 and D143 together coordinate substrate.

It belongs to the transferase hexapeptide repeat family. In terms of assembly, homotrimer.

The protein resides in the cytoplasm. It catalyses the reaction (S)-2,3,4,5-tetrahydrodipicolinate + succinyl-CoA + H2O = (S)-2-succinylamino-6-oxoheptanedioate + CoA. It functions in the pathway amino-acid biosynthesis; L-lysine biosynthesis via DAP pathway; LL-2,6-diaminopimelate from (S)-tetrahydrodipicolinate (succinylase route): step 1/3. The sequence is that of 2,3,4,5-tetrahydropyridine-2,6-dicarboxylate N-succinyltransferase from Xylella fastidiosa (strain 9a5c).